Here is a 543-residue protein sequence, read N- to C-terminus: Secreted effector protein SptP (543 aa).

The segment at 35–139 is chaperone-binding; it reads TDKAYVAPEK…FINLIKNKDN (105 aa). The Bacterial Rho-GAP domain maps to 162–293; sequence DVGAESKQPL…TAELEKIKAG (132 aa). The Tyrosine-protein phosphatase domain maps to 315-543; sequence IPINQQTQVK…QAQLLMTTAS (229 aa). C481 serves as the catalytic Phosphocysteine intermediate.

Forms a complex with SicP.

The protein localises to the secreted. Its subcellular location is the host cytoplasm. It carries out the reaction O-phospho-L-tyrosyl-[protein] + H2O = L-tyrosyl-[protein] + phosphate. Effector proteins function to alter host cell physiology and promote bacterial survival in host tissues. This protein includes tyrosine phosphatase and GTPase activating protein (GAP) activities. After bacterial internalization, GAP mediates the reversal of the cytoskeletal changes induced by SopE. This function is independent of its tyrosine phosphatase activity, which remains unclear. In Salmonella typhi, this protein is Secreted effector protein SptP (sptP).